The following is a 341-amino-acid chain: Biotin synthase (341 aa).

The Radical SAM core domain occupies asparagine 53–lysine 272. [4Fe-4S] cluster is bound by residues cysteine 68, cysteine 72, and cysteine 75. Cysteine 112, cysteine 143, cysteine 203, and arginine 276 together coordinate [2Fe-2S] cluster.

The protein belongs to the radical SAM superfamily. Biotin synthase family. As to quaternary structure, homodimer. Requires [4Fe-4S] cluster as cofactor. It depends on [2Fe-2S] cluster as a cofactor.

It carries out the reaction (4R,5S)-dethiobiotin + (sulfur carrier)-SH + 2 reduced [2Fe-2S]-[ferredoxin] + 2 S-adenosyl-L-methionine = (sulfur carrier)-H + biotin + 2 5'-deoxyadenosine + 2 L-methionine + 2 oxidized [2Fe-2S]-[ferredoxin]. Its pathway is cofactor biosynthesis; biotin biosynthesis; biotin from 7,8-diaminononanoate: step 2/2. Catalyzes the conversion of dethiobiotin (DTB) to biotin by the insertion of a sulfur atom into dethiobiotin via a radical-based mechanism. The chain is Biotin synthase from Nitrobacter winogradskyi (strain ATCC 25391 / DSM 10237 / CIP 104748 / NCIMB 11846 / Nb-255).